The following is a 537-amino-acid chain: MDASMITNSKSITSPPSLALGKSGGGGVIRSSLCNLMMPSKVNFPRQRTQTLKVSQKKLKRATSGGLGVTCSGGDKILVANRGEIAVRVIRTAHEMGIPCVAVYSTIDKDALHVKLADEAVCIGEAPSNQSYLVIPNVLSAAISRGCTMLHPGYGFLSENALFVEMCRDHGINFIGPNPDSIRVMGDKATARETMKNAGVPTVPGSDGLLQSTEEAVRVANEIGFPVMIKATAGGGGRGMRLAKEPGEFVKLLQQAKSEAAAAFGNDGCYLEKFVQNPRHIEFQVLADKFGNVVHFGERDCSIQRRNQKLLEEAPSPALTAELRKAMGDAAVAAAASIGYIGVGTVEFLLDERGSFYFMEMNTRIQVEHPVTEMIYSVDLIEEQIRVAMGEKLRYKQEDIVLRGHSIECRINAEDPFKGFRPGPGRITSYLPSGGPFVRMDSHVYSDYVVPPSYDSLLGKLIVWAPTREKAIERMKRALNDTIITGVPTTINYHKLILDVEDFKNGKVDTAFIVKHEEELAEPQEIVAVKDLTNATV.

The N-terminal 71 residues, 1-71, are a transit peptide targeting the chloroplast; the sequence is MDASMITNSK…ATSGGLGVTC (71 aa). ATP contacts are provided by residues K188, K230, 236–237, 272–275, and H280; these read GG and EKFV. One can recognise an ATP-grasp domain in the interval 192 to 389; that stretch reads RETMKNAGVP…LIEEQIRVAM (198 aa). K309 is a hydrogencarbonate binding site. 2 residues coordinate ATP: E347 and E360. Positions 347, 360, and 362 each coordinate Mg(2+). Mn(2+) contacts are provided by E347, E360, and N362. 3 residues coordinate hydrogencarbonate: R364, V367, and R410. Residue R364 is part of the active site. A biotin-binding site is contributed by R410.

Acetyl-CoA carboxylase is a heterohexamer composed of biotin carboxyl carrier protein, biotin carboxylase and two subunits each of ACCase subunit alpha and ACCase plastid-coded subunit beta (accD). Mg(2+) is required as a cofactor. The cofactor is Mn(2+). In terms of tissue distribution, accumulates in fatty acids synthesizing tissues. Mostly expressed in siliques, developing leaves, and flowers, present in roots and embryos (especially at torpedo stage), and, to a lower extent, in mature leaves.

The protein resides in the plastid. The protein localises to the chloroplast. The catalysed reaction is N(6)-biotinyl-L-lysyl-[protein] + hydrogencarbonate + ATP = N(6)-carboxybiotinyl-L-lysyl-[protein] + ADP + phosphate + H(+). The protein operates within lipid metabolism; malonyl-CoA biosynthesis; malonyl-CoA from acetyl-CoA: step 1/1. Its function is as follows. This protein is a component of the acetyl coenzyme A carboxylase complex; first, biotin carboxylase catalyzes the carboxylation of the carrier protein and then the transcarboxylase transfers the carboxyl group to form malonyl-CoA. The sequence is that of Biotin carboxylase, chloroplastic (CAC2) from Arabidopsis thaliana (Mouse-ear cress).